The chain runs to 113 residues: Probable 4-amino-4-deoxy-L-arabinose-phosphoundecaprenol flippase subunit ArnE (113 aa).

3 consecutive transmembrane segments (helical) span residues 39 to 59 (IFWLITAIAMLGFGMLFWLRL), 62 to 82 (ILPLSIAYPMLSINFIVVTLI), and 91 to 111 (VNVKHWVGIASIMLGIVLMSM). Residues 42–111 (LITAIAMLGF…IMLGIVLMSM (70 aa)) form the EamA domain.

The protein belongs to the ArnE family. In terms of assembly, heterodimer of ArnE and ArnF.

It localises to the cell inner membrane. It participates in bacterial outer membrane biogenesis; lipopolysaccharide biosynthesis. Functionally, translocates 4-amino-4-deoxy-L-arabinose-phosphoundecaprenol (alpha-L-Ara4N-phosphoundecaprenol) from the cytoplasmic to the periplasmic side of the inner membrane. This chain is Probable 4-amino-4-deoxy-L-arabinose-phosphoundecaprenol flippase subunit ArnE, found in Proteus mirabilis (strain HI4320).